We begin with the raw amino-acid sequence, 384 residues long: Succinyl-diaminopimelate desuccinylase (384 aa).

Histidine 71 provides a ligand contact to Zn(2+). Residue aspartate 73 is part of the active site. Zn(2+) is bound at residue aspartate 104. The active-site Proton acceptor is glutamate 139. Residues glutamate 140, glutamate 168, and histidine 357 each coordinate Zn(2+).

Belongs to the peptidase M20A family. DapE subfamily. Homodimer. Zn(2+) is required as a cofactor. Requires Co(2+) as cofactor.

It catalyses the reaction N-succinyl-(2S,6S)-2,6-diaminopimelate + H2O = (2S,6S)-2,6-diaminopimelate + succinate. Its pathway is amino-acid biosynthesis; L-lysine biosynthesis via DAP pathway; LL-2,6-diaminopimelate from (S)-tetrahydrodipicolinate (succinylase route): step 3/3. Its function is as follows. Catalyzes the hydrolysis of N-succinyl-L,L-diaminopimelic acid (SDAP), forming succinate and LL-2,6-diaminopimelate (DAP), an intermediate involved in the bacterial biosynthesis of lysine and meso-diaminopimelic acid, an essential component of bacterial cell walls. This chain is Succinyl-diaminopimelate desuccinylase, found in Bradyrhizobium sp. (strain ORS 278).